Reading from the N-terminus, the 173-residue chain is Myosin light chain 5 (173 aa).

The interval 1–20 (MASRKTKKKEGGALRAQRAS) is disordered. EF-hand domains lie at 30-65 (TQIQ…LGKT), 100-135 (DAEE…QADK), and 136-171 (MTAE…GEEK). The Ca(2+) site is built by Asp-43, Asn-45, Asp-47, and Asp-54.

In terms of assembly, myosin is a hexamer of 2 heavy chains and 4 light chains. Expressed in fetal skeletal muscle and retina.

The chain is Myosin light chain 5 (MYL5) from Homo sapiens (Human).